We begin with the raw amino-acid sequence, 183 residues long: Large ribosomal subunit protein uL5 (183 aa).

Belongs to the universal ribosomal protein uL5 family. Part of the 50S ribosomal subunit; part of the 5S rRNA/L5/L18/L25 subcomplex. Contacts the 5S rRNA and the P site tRNA. Forms a bridge to the 30S subunit in the 70S ribosome.

This is one of the proteins that bind and probably mediate the attachment of the 5S RNA into the large ribosomal subunit, where it forms part of the central protuberance. In the 70S ribosome it contacts protein S13 of the 30S subunit (bridge B1b), connecting the 2 subunits; this bridge is implicated in subunit movement. Contacts the P site tRNA; the 5S rRNA and some of its associated proteins might help stabilize positioning of ribosome-bound tRNAs. The sequence is that of Large ribosomal subunit protein uL5 from Pseudothermotoga lettingae (strain ATCC BAA-301 / DSM 14385 / NBRC 107922 / TMO) (Thermotoga lettingae).